Consider the following 304-residue polypeptide: Polyisoprenyl-teichoic acid--peptidoglycan teichoic acid transferase TagU (304 aa).

Topologically, residues 1-4 (MKKK) are cytoplasmic. A helical; Signal-anchor for type II membrane protein transmembrane segment spans residues 5–25 (ILFWILGIIGILIIGGGAYAY). At 26-304 (SIYSSVSKTL…KLRAHLEVTK (279 aa)) the chain is on the extracellular side.

Belongs to the LytR/CpsA/Psr (LCP) family.

It is found in the cell membrane. Its pathway is cell wall biogenesis. Functionally, may catalyze the final step in cell wall teichoic acid biosynthesis, the transfer of the anionic cell wall polymers (APs) from their lipid-linked precursor to the cell wall peptidoglycan (PG). In Bacillus cereus (strain ATCC 14579 / DSM 31 / CCUG 7414 / JCM 2152 / NBRC 15305 / NCIMB 9373 / NCTC 2599 / NRRL B-3711), this protein is Polyisoprenyl-teichoic acid--peptidoglycan teichoic acid transferase TagU.